The primary structure comprises 208 residues: Small ribosomal subunit protein uS4 (208 aa).

The 66-residue stretch at 98-163 (QRLDNVVYRM…NPQITRAIEL (66 aa)) folds into the S4 RNA-binding domain.

It belongs to the universal ribosomal protein uS4 family. In terms of assembly, part of the 30S ribosomal subunit. Contacts protein S5. The interaction surface between S4 and S5 is involved in control of translational fidelity.

Functionally, one of the primary rRNA binding proteins, it binds directly to 16S rRNA where it nucleates assembly of the body of the 30S subunit. Its function is as follows. With S5 and S12 plays an important role in translational accuracy. The chain is Small ribosomal subunit protein uS4 from Campylobacter jejuni (strain RM1221).